A 224-amino-acid chain; its full sequence is MQFPAFYVTGTDTGIGKTVASTALLHAVRARGHTAVGMKPVASGCVATPQGWHNEDALALQAASQPQPDYATLNPYALPAALAPELAAADVGVTLSLVPLQQALAQLRAQAEVVVVEGVGGWAAPLSAQLDQADLVRALQLPVVLVVGVRLGCINHARLTAAAIAADGLRCIGWIANEIDPQMERIEDNIRMLGQRLAMPCWGRIPWRPNAQAEGLAQHIRLPE.

Gly14 to Val19 contributes to the ATP binding site. Thr18 is a binding site for Mg(2+). Residue Lys39 is part of the active site. Ser43 serves as a coordination point for substrate. Residues Asp56, Glu117–Gly120, and Asn177–Glu178 each bind ATP. Positions 56 and 117 each coordinate Mg(2+).

The protein belongs to the dethiobiotin synthetase family. Homodimer. The cofactor is Mg(2+).

Its subcellular location is the cytoplasm. It carries out the reaction (7R,8S)-7,8-diammoniononanoate + CO2 + ATP = (4R,5S)-dethiobiotin + ADP + phosphate + 3 H(+). It functions in the pathway cofactor biosynthesis; biotin biosynthesis; biotin from 7,8-diaminononanoate: step 1/2. Its function is as follows. Catalyzes a mechanistically unusual reaction, the ATP-dependent insertion of CO2 between the N7 and N8 nitrogen atoms of 7,8-diaminopelargonic acid (DAPA, also called 7,8-diammoniononanoate) to form a ureido ring. This is ATP-dependent dethiobiotin synthetase BioD from Xanthomonas campestris pv. campestris (strain 8004).